We begin with the raw amino-acid sequence, 162 residues long: UPF0305 protein MmarC5_0909 (162 aa).

This sequence belongs to the UPF0305 family.

The sequence is that of UPF0305 protein MmarC5_0909 from Methanococcus maripaludis (strain C5 / ATCC BAA-1333).